The following is a 309-amino-acid chain: Ferredoxin--NADP reductase (309 aa).

7 residues coordinate FAD: Asp-25, Gln-33, Tyr-38, Val-77, Phe-107, Asp-267, and Thr-307.

It belongs to the ferredoxin--NADP reductase type 2 family. In terms of assembly, homodimer. It depends on FAD as a cofactor.

The enzyme catalyses 2 reduced [2Fe-2S]-[ferredoxin] + NADP(+) + H(+) = 2 oxidized [2Fe-2S]-[ferredoxin] + NADPH. The protein is Ferredoxin--NADP reductase of Lactobacillus acidophilus (strain ATCC 700396 / NCK56 / N2 / NCFM).